Reading from the N-terminus, the 474-residue chain is 3-isopropylmalate dehydratase large subunit (474 aa).

The [4Fe-4S] cluster site is built by cysteine 353, cysteine 414, and cysteine 417.

This sequence belongs to the aconitase/IPM isomerase family. LeuC type 1 subfamily. Heterodimer of LeuC and LeuD. Requires [4Fe-4S] cluster as cofactor.

It catalyses the reaction (2R,3S)-3-isopropylmalate = (2S)-2-isopropylmalate. The protein operates within amino-acid biosynthesis; L-leucine biosynthesis; L-leucine from 3-methyl-2-oxobutanoate: step 2/4. Its function is as follows. Catalyzes the isomerization between 2-isopropylmalate and 3-isopropylmalate, via the formation of 2-isopropylmaleate. This is 3-isopropylmalate dehydratase large subunit from Xylella fastidiosa (strain 9a5c).